The primary structure comprises 285 residues: MVVRGILGRQRREYRAPEPHPSGARAPKLPGELIPNHVACVMDGNGRWAKERGLPRTEGHKVGEGVVMDVLKGCIELGVKNLSLYAFSTENWKRSPEEVRFLMNFNRDVIRRRRDEMDALGIRIRWVGRMPKLWKSVVQELQIAQEQTKDNDAMTLYFCVNYGGRAELADAAKAMAEDVAAGRLDPAKVSEKTIQKYLYYPDMPDVDLFLRPSGEQRTSNYLLWQSSYAEMVFQDVLWPDFDRRDLWRACVEYASRDRRFGGAVPNEQLLEMERDMKGSEGVQDA.

The segment at 11-30 (RREYRAPEPHPSGARAPKLP) is disordered. Residue aspartate 43 is part of the active site. Aspartate 43 serves as a coordination point for Mg(2+). Residues 44–47 (GNGR), tryptophan 48, arginine 56, histidine 60, and 88–90 (STE) each bind substrate. Asparagine 91 serves as the catalytic Proton acceptor. Substrate is bound by residues tryptophan 92, arginine 94, arginine 211, and 217-219 (RTS). A Mg(2+)-binding site is contributed by glutamate 230.

This sequence belongs to the UPP synthase family. Homodimer. Mg(2+) serves as cofactor.

Catalyzes the condensation of isopentenyl diphosphate (IPP) with allylic pyrophosphates generating different type of terpenoids. The protein is Isoprenyl transferase 2 of Streptomyces avermitilis (strain ATCC 31267 / DSM 46492 / JCM 5070 / NBRC 14893 / NCIMB 12804 / NRRL 8165 / MA-4680).